Consider the following 476-residue polypeptide: Cardiolipin synthase (476 aa).

2 consecutive transmembrane segments (helical) span residues 2-22 and 31-51; these read HLFI…IIFI and WAWI…YILF. PLD phosphodiesterase domains lie at 207–234 and 389–416; these read INYR…GDEY and EKGF…DIRS. Active-site residues include His212, Lys214, Asp219, His394, Lys396, and Asp401.

Belongs to the phospholipase D family. Cardiolipin synthase subfamily.

The protein localises to the cell membrane. It carries out the reaction 2 a 1,2-diacyl-sn-glycero-3-phospho-(1'-sn-glycerol) = a cardiolipin + glycerol. Functionally, catalyzes the reversible phosphatidyl group transfer from one phosphatidylglycerol molecule to another to form cardiolipin (CL) (diphosphatidylglycerol) and glycerol. The polypeptide is Cardiolipin synthase (cls) (Clostridium perfringens (strain 13 / Type A)).